Here is a 762-residue protein sequence, read N- to C-terminus: Phospholipase D alpha 4 (762 aa).

Residues 1 to 116 (MELEEQKKYF…VINGFFPLIA (116 aa)) form the C2 domain. Aspartate 172 contacts Ca(2+). One can recognise a PLD phosphodiesterase 1 domain in the interval 301–339 (TAFAHHQKTITLDTRVTNSSTKEREIMSFLGGFDLCDGR). Catalysis depends on residues histidine 306, lysine 308, and aspartate 313. Histidine 306 is a binding site for a 1,2-diacyl-sn-glycero-3-phosphate. Ca(2+) is bound by residues histidine 345 and histidine 377. A 1,2-diacyl-sn-glycero-3-phosphate contacts are provided by glutamine 477 and histidine 615. The PLD phosphodiesterase 2 domain maps to 610-637 (FMVYVHSKLMIVDDTYILIGSANINQRS). Residues histidine 615, lysine 617, and aspartate 622 contribute to the active site. Glutamate 671 is a Ca(2+) binding site.

Belongs to the phospholipase D family. C2-PLD subfamily. Requires Ca(2+) as cofactor. As to expression, expressed in roots, leaves, stems, siliques,flowers and inflorescences.

Its subcellular location is the cell membrane. It carries out the reaction a 1,2-diacyl-sn-glycero-3-phosphocholine + H2O = a 1,2-diacyl-sn-glycero-3-phosphate + choline + H(+). Functionally, hydrolyzes glycerol-phospholipids at the terminal phosphodiesteric bond to generate phosphatidic acids (PA). Promotes growth and plays a role in nitrogen signaling. This is Phospholipase D alpha 4 from Arabidopsis thaliana (Mouse-ear cress).